We begin with the raw amino-acid sequence, 351 residues long: Histidinol-phosphate aminotransferase (351 aa).

At Lys221 the chain carries N6-(pyridoxal phosphate)lysine.

This sequence belongs to the class-II pyridoxal-phosphate-dependent aminotransferase family. Histidinol-phosphate aminotransferase subfamily. In terms of assembly, homodimer. Requires pyridoxal 5'-phosphate as cofactor.

It carries out the reaction L-histidinol phosphate + 2-oxoglutarate = 3-(imidazol-4-yl)-2-oxopropyl phosphate + L-glutamate. The protein operates within amino-acid biosynthesis; L-histidine biosynthesis; L-histidine from 5-phospho-alpha-D-ribose 1-diphosphate: step 7/9. The protein is Histidinol-phosphate aminotransferase of Staphylococcus saprophyticus subsp. saprophyticus (strain ATCC 15305 / DSM 20229 / NCIMB 8711 / NCTC 7292 / S-41).